The primary structure comprises 272 residues: Shikimate dehydrogenase (NADP(+)) (272 aa).

Residues 14–16 (SKS) and Thr-61 contribute to the shikimate site. The active-site Proton acceptor is the Lys-65. Glu-77 is an NADP(+) binding site. Shikimate is bound by residues Asn-86 and Asp-102. Residues 126–130 (GAGGA), 149–154 (NRTVSR), and Met-213 each bind NADP(+). Tyr-215 contributes to the shikimate binding site. Gly-237 lines the NADP(+) pocket.

The protein belongs to the shikimate dehydrogenase family. As to quaternary structure, homodimer.

It catalyses the reaction shikimate + NADP(+) = 3-dehydroshikimate + NADPH + H(+). It participates in metabolic intermediate biosynthesis; chorismate biosynthesis; chorismate from D-erythrose 4-phosphate and phosphoenolpyruvate: step 4/7. In terms of biological role, involved in the biosynthesis of the chorismate, which leads to the biosynthesis of aromatic amino acids. Catalyzes the reversible NADPH linked reduction of 3-dehydroshikimate (DHSA) to yield shikimate (SA). The sequence is that of Shikimate dehydrogenase (NADP(+)) from Escherichia coli (strain K12 / MC4100 / BW2952).